We begin with the raw amino-acid sequence, 459 residues long: Ammonium transporter Rh type B (459 aa).

Residues 1-10 (MAESTNLRLR) lie on the Cytoplasmic side of the membrane. A helical membrane pass occupies residues 11–31 (LPLICIILEVILIILFGVLVE). Over 32–58 (YNDDTDAKKWNKNNSTDPATNEFYYRY) the chain is Extracellular. An N-linked (GlcNAc...) asparagine glycan is attached at Asn-45. The chain crosses the membrane as a helical span at residues 59–79 (PSFQDVHVMIFVGFGFLMTFL). Over 80–87 (QRYGFSSM) the chain is Cytoplasmic. A helical membrane pass occupies residues 88–108 (GFNFLIAAFSLQWATLMQGFF). Residues 109 to 121 (HGMHHGKIHVGVT) lie on the Extracellular side of the membrane. The helical transmembrane segment at 122-142 (SMINADFCTGAVLISFGAVLG) threads the bilayer. The Cytoplasmic portion of the chain corresponds to 143-149 (KTSPVQL). A helical membrane pass occupies residues 150 to 170 (LVMAILEVTLFAVNEYILLSI). The Extracellular segment spans residues 171-176 (LGANDA). A helical transmembrane segment spans residues 177–197 (GGSMTIHTFGAYFGLMVTRIL). At 198-216 (HRPNLDKSKHKNSSVYHSD) the chain is on the cytoplasmic side. The chain crosses the membrane as a helical span at residues 217–237 (LFAMIGTIFLWMFWPSFNSAI). Residues 238-248 (TQYGDPQHRTA) lie on the Extracellular side of the membrane. Residues 249 to 269 (ANTYYSLAACTLATFGFSSLV) traverse the membrane as a helical segment. At 270-274 (NPEGK) the chain is on the cytoplasmic side. Residues 275-295 (LDMVHIQNAALAGGVAVGTAG) traverse the membrane as a helical segment. Glu-296 is a topological domain (extracellular). The helical transmembrane segment at 297–317 (MMLTPFGSMIVGFLAGTISVL) threads the bilayer. Residues 318 to 340 (GYKYLTPFMESKLKIQDTCGIHN) are Cytoplasmic-facing. A helical membrane pass occupies residues 341 to 361 (LHGMPGILGAIVGAVTAALAS). Residues 362–392 (RDVYGNGLDKVFLEAADNSQWSAQTKGGFQA) lie on the Extracellular side of the membrane. A helical membrane pass occupies residues 393–413 (ISLAVTLGIALIGGLITGFLL). The Cytoplasmic portion of the chain corresponds to 414–459 (KLPIYGTPPDTQCFEDAVYWEVPGEEEDHHELNEVSTQNEVEKLNS). The disordered stretch occupies residues 440 to 459 (EDHHELNEVSTQNEVEKLNS).

Belongs to the ammonium transporter (TC 2.A.49) family. Rh subfamily.

The protein localises to the basolateral cell membrane. It is found in the cytoplasmic vesicle membrane. Functions as an ammonia transporter. May play a role in the elimination of ammonia in the gill. The polypeptide is Ammonium transporter Rh type B (rhbg) (Danio rerio (Zebrafish)).